The chain runs to 360 residues: LETM1 domain-containing protein 1 (360 aa).

The segment at 1–110 is required and sufficient for mitochondrial import; that stretch reads MALSRVCWAR…KKARRIKTNM (110 aa). The Cytoplasmic portion of the chain corresponds to 1–137; sequence MALSRVCWAR…LRQFRQDVTK (137 aa). Residues 138 to 158 traverse the membrane as a helical segment; sequence CLFLGIISIPPFANYLVFLLM. Topologically, residues 159–360 are mitochondrial intermembrane; the sequence is YLFPRQLLIR…LSTNYLGTRR (202 aa). A Letm1 RBD domain is found at 186-360; that stretch reads FRKQSHPEII…LSTNYLGTRR (175 aa).

Interacts with BRI3BP. Interacts (via C-terminal) with SMARCA4; the interaction regulates transcriptional expression of thermogenic genes in brown adipose tissue. Kidney, liver, skeletal muscle, heart and brain. Overexpressed in various tumors including leukemia, lymphoma, and carcinomas of the breast, kidney, ovary, stomach, colon and uterine cervix.

It is found in the mitochondrion outer membrane. The protein resides in the nucleus. It localises to the mitochondrion inner membrane. In terms of biological role, plays an essential role for mitochondrial structure and function, as well as thermogenesis of brown adipocytes. In brown adipose tissue also localizes in the nucleus where it interacts with the chromatin remodeler SMARCA4 to regulate thermogenic genes expression, such as UCP1. May regulate phagocytosis and inflammatory responses to lipopolysaccharide in macrophages. Involved in tumorigenesis and may function as a negative regulator of the p53/TP53. This chain is LETM1 domain-containing protein 1, found in Homo sapiens (Human).